Here is a 736-residue protein sequence, read N- to C-terminus: Catalase-1 (736 aa).

The interval 1 to 29 is disordered; it reads MSNIISQAGQKAKEALTSAPSSKKVDDLK. Residue R89 coordinates heme. Residue H92 is part of the active site. R129 serves as a coordination point for heme. The active site involves N165. 4 residues coordinate heme: F178, R375, Y379, and R386. The segment at residues 356–379 is a cross-link (3-(S-cysteinyl)-tyrosine (Cys-Tyr)); that stretch reads CTSHVVNGIGFSDDPLLQGRNFSY.

The protein belongs to the catalase family. Homotetramer. Requires heme as cofactor. Post-translationally, glycosylated; with alpha-glucose and/or alpha-mannose.

Its subcellular location is the secreted. The protein resides in the cell wall. It carries out the reaction 2 H2O2 = O2 + 2 H2O. In terms of biological role, occurs in almost all aerobically respiring organisms and serves to protect cells from the toxic effects of hydrogen peroxide. In Neurospora crassa (strain ATCC 24698 / 74-OR23-1A / CBS 708.71 / DSM 1257 / FGSC 987), this protein is Catalase-1 (cat-1).